The following is a 500-amino-acid chain: UDP-N-acetylmuramoyl-L-alanyl-D-glutamate--2,6-diaminopimelate ligase (500 aa).

UDP-N-acetyl-alpha-D-muramoyl-L-alanyl-D-glutamate is bound by residues Leu-26, Ser-28, and His-43–Val-45. Gly-123–Thr-129 provides a ligand contact to ATP. Residues Asn-164, Thr-165–Thr-166, Ser-192, Gln-198, and Arg-200 contribute to the UDP-N-acetyl-alpha-D-muramoyl-L-alanyl-D-glutamate site. Lys-232 is subject to N6-carboxylysine. Meso-2,6-diaminopimelate-binding positions include Arg-399, Asp-423–Arg-426, Gly-474, and Glu-478. The Meso-diaminopimelate recognition motif motif lies at Asp-423 to Arg-426.

This sequence belongs to the MurCDEF family. MurE subfamily. Mg(2+) serves as cofactor. Post-translationally, carboxylation is probably crucial for Mg(2+) binding and, consequently, for the gamma-phosphate positioning of ATP.

The protein localises to the cytoplasm. The enzyme catalyses UDP-N-acetyl-alpha-D-muramoyl-L-alanyl-D-glutamate + meso-2,6-diaminopimelate + ATP = UDP-N-acetyl-alpha-D-muramoyl-L-alanyl-gamma-D-glutamyl-meso-2,6-diaminopimelate + ADP + phosphate + H(+). Its pathway is cell wall biogenesis; peptidoglycan biosynthesis. Functionally, catalyzes the addition of meso-diaminopimelic acid to the nucleotide precursor UDP-N-acetylmuramoyl-L-alanyl-D-glutamate (UMAG) in the biosynthesis of bacterial cell-wall peptidoglycan. The sequence is that of UDP-N-acetylmuramoyl-L-alanyl-D-glutamate--2,6-diaminopimelate ligase from Actinobacillus pleuropneumoniae serotype 5b (strain L20).